The following is a 311-amino-acid chain: MKVAVLGAAGGIGQALALLLKTQLPAGSKLSLYDIAPVTPGVAVDLSHIPTAVEIKGFAGEDPTPALVGADVVLISAGVARKPGMDRSDLFNINAGIVRNLIEKVAVTCPKALVGIITNPVNTTVAIAAEVMKKAGVYDKNRLFGVTTLDVIRSETFIAELKGLNVADVKINVIGGHSGVTILPLLSQVEGVTFSDEEVASLTKRIQNAGTEVVEAKAGGGSATLSMGQAACRFGMSLVRGLQGEANVVECAYVDGGSEHAEFFAQPVLLGKNGIEKVLPYGEVSAFEANARDSMLDTLKGDIKLGVDFVK.

Residues 7–13 (GAAGGIG) and Asp34 contribute to the NAD(+) site. Residues Arg81 and Arg87 each coordinate substrate. NAD(+) is bound by residues Asn94 and 117–119 (ITN). Substrate contacts are provided by Asn119 and Arg153. His177 functions as the Proton acceptor in the catalytic mechanism. Met227 serves as a coordination point for NAD(+).

It belongs to the LDH/MDH superfamily. MDH type 1 family. In terms of assembly, homodimer.

The catalysed reaction is (S)-malate + NAD(+) = oxaloacetate + NADH + H(+). Catalyzes the reversible oxidation of malate to oxaloacetate. The protein is Malate dehydrogenase (mdh) of Shewanella oneidensis (strain ATCC 700550 / JCM 31522 / CIP 106686 / LMG 19005 / NCIMB 14063 / MR-1).